Reading from the N-terminus, the 240-residue chain is Splicing factor rtf2 (240 aa).

Disordered stretches follow at residues 1–22 and 181–240; these read MGNDGGSLPTRNELVKEPGKVP and SLNK…RVKI. Positions 185 to 210 are enriched in basic residues; that stretch reads ASKKSNKNGDKKRKHVSKSNSKHAKH. Basic and acidic residues-rich tracts occupy residues 211-224 and 231-240; these read ELRTNRMLDGENVK and DMERVKRVKI.

Belongs to the rtf2 family. As to quaternary structure, interacts with pcn1.

The protein localises to the nucleus. In terms of biological role, putative splicing factor that is required for the correct splicing of a subset of pre-mRNAs. Required for the correct splicing of rtf1, a replication termination factor that mediates site-specific replication termination at replication barrier RTS1. The protein is Splicing factor rtf2 of Schizosaccharomyces pombe (strain 972 / ATCC 24843) (Fission yeast).